We begin with the raw amino-acid sequence, 418 residues long: Queuine tRNA-ribosyltransferase accessory subunit 2 (418 aa).

Zn(2+) is bound by residues Cys325, Cys327, Cys330, and His356.

The protein belongs to the queuine tRNA-ribosyltransferase family. QTRT2 subfamily. Heterodimer of a catalytic subunit and an accessory subunit. Zn(2+) serves as cofactor.

Its subcellular location is the cytoplasm. Its function is as follows. Non-catalytic subunit of the queuine tRNA-ribosyltransferase (TGT) that catalyzes the base-exchange of a guanine (G) residue with queuine (Q) at position 34 (anticodon wobble position) in tRNAs with GU(N) anticodons (tRNA-Asp, -Asn, -His and -Tyr), resulting in the hypermodified nucleoside queuosine (7-(((4,5-cis-dihydroxy-2-cyclopenten-1-yl)amino)methyl)-7-deazaguanosine). This Drosophila melanogaster (Fruit fly) protein is Queuine tRNA-ribosyltransferase accessory subunit 2.